The following is a 341-amino-acid chain: Tetraacyldisaccharide 4'-kinase (341 aa).

T54–T61 is an ATP binding site.

The protein belongs to the LpxK family.

The catalysed reaction is a lipid A disaccharide + ATP = a lipid IVA + ADP + H(+). It functions in the pathway glycolipid biosynthesis; lipid IV(A) biosynthesis; lipid IV(A) from (3R)-3-hydroxytetradecanoyl-[acyl-carrier-protein] and UDP-N-acetyl-alpha-D-glucosamine: step 6/6. In terms of biological role, transfers the gamma-phosphate of ATP to the 4'-position of a tetraacyldisaccharide 1-phosphate intermediate (termed DS-1-P) to form tetraacyldisaccharide 1,4'-bis-phosphate (lipid IVA). This chain is Tetraacyldisaccharide 4'-kinase, found in Brucella suis (strain ATCC 23445 / NCTC 10510).